A 375-amino-acid chain; its full sequence is Succinyl-diaminopimelate desuccinylase (375 aa).

His66 lines the Zn(2+) pocket. The active site involves Asp68. Asp99 provides a ligand contact to Zn(2+). Glu133 acts as the Proton acceptor in catalysis. 3 residues coordinate Zn(2+): Glu134, Glu162, and His348.

It belongs to the peptidase M20A family. DapE subfamily. In terms of assembly, homodimer. The cofactor is Zn(2+). Co(2+) is required as a cofactor.

The catalysed reaction is N-succinyl-(2S,6S)-2,6-diaminopimelate + H2O = (2S,6S)-2,6-diaminopimelate + succinate. The protein operates within amino-acid biosynthesis; L-lysine biosynthesis via DAP pathway; LL-2,6-diaminopimelate from (S)-tetrahydrodipicolinate (succinylase route): step 3/3. In terms of biological role, catalyzes the hydrolysis of N-succinyl-L,L-diaminopimelic acid (SDAP), forming succinate and LL-2,6-diaminopimelate (DAP), an intermediate involved in the bacterial biosynthesis of lysine and meso-diaminopimelic acid, an essential component of bacterial cell walls. The chain is Succinyl-diaminopimelate desuccinylase from Shigella sonnei (strain Ss046).